A 556-amino-acid chain; its full sequence is Glucose-6-phosphate isomerase (556 aa).

The active-site Proton donor is glutamate 363. Catalysis depends on residues histidine 394 and lysine 522.

The protein belongs to the GPI family.

It is found in the cytoplasm. The catalysed reaction is alpha-D-glucose 6-phosphate = beta-D-fructose 6-phosphate. The protein operates within carbohydrate biosynthesis; gluconeogenesis. It participates in carbohydrate degradation; glycolysis; D-glyceraldehyde 3-phosphate and glycerone phosphate from D-glucose: step 2/4. Functionally, catalyzes the reversible isomerization of glucose-6-phosphate to fructose-6-phosphate. In Frankia casuarinae (strain DSM 45818 / CECT 9043 / HFP020203 / CcI3), this protein is Glucose-6-phosphate isomerase.